The primary structure comprises 495 residues: Glycerol kinase (495 aa).

Thr-16 is a binding site for ADP. ATP is bound by residues Thr-16 and Thr-17. Thr-16 lines the sn-glycerol 3-phosphate pocket. Arg-20 is a binding site for ADP. Positions 86, 87, 138, and 246 each coordinate sn-glycerol 3-phosphate. Glycerol is bound by residues Arg-86, Glu-87, Tyr-138, Asp-246, and Gln-247. ADP-binding residues include Thr-268 and Gly-316. The ATP site is built by Thr-268, Gly-316, Gln-320, and Gly-417. 2 residues coordinate ADP: Gly-417 and Asn-421.

This sequence belongs to the FGGY kinase family.

It catalyses the reaction glycerol + ATP = sn-glycerol 3-phosphate + ADP + H(+). Its pathway is polyol metabolism; glycerol degradation via glycerol kinase pathway; sn-glycerol 3-phosphate from glycerol: step 1/1. With respect to regulation, inhibited by fructose 1,6-bisphosphate (FBP). In terms of biological role, key enzyme in the regulation of glycerol uptake and metabolism. Catalyzes the phosphorylation of glycerol to yield sn-glycerol 3-phosphate. The sequence is that of Glycerol kinase from Synechocystis sp. (strain ATCC 27184 / PCC 6803 / Kazusa).